Reading from the N-terminus, the 157-residue chain is Nascent polypeptide-associated complex subunit alpha (157 aa).

Positions 6-71 (TTDESHIHKT…LGSPVNLHQL (66 aa)) constitute an NAC-A/B domain. Over residues 81–107 (SSKDQEGPGLYDEIHSDPQEDGVKEAE) the composition is skewed to basic and acidic residues. Residues 81 to 116 (SSKDQEGPGLYDEIHSDPQEDGVKEAEEITVDPSDE) are disordered. Residues 118 to 157 (LSEEDIKLISSQVKASRNDIIKALVESEYDVVDAMMKLTK) enclose the UBA domain.

This sequence belongs to the NAC-alpha family.

The protein localises to the cytoplasm. Its subcellular location is the nucleus. In terms of biological role, may be involved in mitochondrial protein import by enhancing productive ribosome interactions with the outer mitochondrial membrane and blocks the inappropriate interaction of ribosomes translating non-secretory nascent polypeptides with translocation sites in the membrane of the endoplasmic reticulum. EGD2 may also be involved in transcription regulation. The protein is Nascent polypeptide-associated complex subunit alpha (EGD2) of Encephalitozoon cuniculi (strain GB-M1) (Microsporidian parasite).